A 637-amino-acid chain; its full sequence is Protein arginine N-methyltransferase 5 (637 aa).

Alanine 2 is modified (N-acetylalanine; in Protein arginine N-methyltransferase 5, N-terminally processed). The TIM barrel stretch occupies residues 13–292 (RVSSGRDLNC…YLEYLSQNRP (280 aa)). The region spanning 308 to 615 (LQSPLQPLMD…SNSKKVWYEW (308 aa)) is the SAM-dependent MTase PRMT-type domain. Tyrosine 324 contributes to the S-adenosyl-L-methionine binding site. Phenylalanine 327 contacts a protein. S-adenosyl-L-methionine is bound by residues 333-334 (KY), glutamate 392, and 419-420 (DM). Residues glutamate 435 and glutamate 444 each contribute to the a protein site. Catalysis depends on proton donor/acceptor residues glutamate 435 and glutamate 444. A beta barrel region spans residues 465-637 (PGEYTSFLAP…PTGRSYTIGL (173 aa)). The interval 488–494 (REKDRDP) is dimerization.

This sequence belongs to the class I-like SAM-binding methyltransferase superfamily. Protein arginine N-methyltransferase family. In terms of assembly, forms, at least, homodimers and homotetramers. Component of the methylosome complex, composed of PRMT5, WDR77 and CLNS1A. Found in a complex composed of PRMT5, WDR77 and RIOK1. RIOK1 and CLNS1A associate with PRMT5 in a mutually exclusive fashion, which allows the recruitment of distinct methylation substrates, such as nucleolin/NCL and Sm proteins, respectively. Interacts with PRDM1. Identified in a complex composed of methylosome and PRMT1 and ERH. Interacts with EGFR; methylates EGFR and stimulates EGFR-mediated ERK activation. Interacts with HOXA9. Interacts with SRGAP2. Found in a complex with COPRS, RUNX1 and CBFB. Interacts with CHTOP; the interaction symmetrically methylates CHTOP, but seems to require the presence of PRMT1. Interacts with EPB41L3; this modulates methylation of target proteins. Component of a high molecular weight E2F-pocket protein complex, CERC (cyclin E1 repressor complex). Associates with SWI/SNF remodeling complexes containing SMARCA2 and SMARCA4. Interacts with JAK2, SSTR1, SUPT5H, BRAF and with active RAF1. Interacts with LSM11, PRMT7 and SNRPD3. Interacts with COPRS; promoting its recruitment on histone H4. Interacts with CLNS1A/pICln. Identified in a complex with CLNS1A/pICln and Sm proteins. Interacts with RPS10. Interacts with WDR77. Interacts with IWS1. Interacts with CRY1. Interacts with POLR2A. Interacts with SMN1/SMN2. Interacts with LYAR; this interaction is direct. Interacts with TTC5/STRAP; this interaction is DNA damage-dependent and promotes PRMT5 interaction with p53/TP53. Interacts with p53/TP53 in response to DNA damage; the interaction is TTC5/STRAP dependent. Interacts with FAM47E; the interaction is direct, promotes PRMT5 localization to chromatin, and does not disrupt its association with WDR77 or STUB1. Interacts with TDRD6. Interacts with STUB1. Interacts with MBD2. Does not interact with MBD3. As to expression, ubiquitous.

The protein resides in the cytoplasm. Its subcellular location is the nucleus. The protein localises to the chromosome. It localises to the golgi apparatus. It catalyses the reaction L-arginyl-[protein] + 2 S-adenosyl-L-methionine = N(omega),N(omega)'-dimethyl-L-arginyl-[protein] + 2 S-adenosyl-L-homocysteine + 2 H(+). With respect to regulation, activity is increased by EGF, HGF, FGF1 or FGF2 treatments, and slightly decreased by NGF treatment. In terms of biological role, arginine methyltransferase that can both catalyze the formation of omega-N monomethylarginine (MMA) and symmetrical dimethylarginine (sDMA), with a preference for the formation of MMA. Specifically mediates the symmetrical dimethylation of arginine residues in the small nuclear ribonucleoproteins Sm D1 (SNRPD1) and Sm D3 (SNRPD3); such methylation being required for the assembly and biogenesis of snRNP core particles. Methylates SUPT5H and may regulate its transcriptional elongation properties. May methylate the N-terminal region of MBD2. Mono- and dimethylates arginine residues of myelin basic protein (MBP) in vitro. May play a role in cytokine-activated transduction pathways. Negatively regulates cyclin E1 promoter activity and cellular proliferation. Methylates histone H2A and H4 'Arg-3' during germ cell development. Methylates histone H3 'Arg-8', which may repress transcription. Methylates the Piwi proteins (PIWIL1, PIWIL2 and PIWIL4), methylation of Piwi proteins being required for the interaction with Tudor domain-containing proteins and subsequent localization to the meiotic nuage. Methylates RPS10. Attenuates EGF signaling through the MAPK1/MAPK3 pathway acting at 2 levels. First, monomethylates EGFR; this enhances EGFR 'Tyr-1197' phosphorylation and PTPN6 recruitment, eventually leading to reduced SOS1 phosphorylation. Second, methylates RAF1 and probably BRAF, hence destabilizing these 2 signaling proteins and reducing their catalytic activity. Required for induction of E-selectin and VCAM-1, on the endothelial cells surface at sites of inflammation. Methylates HOXA9. Methylates and regulates SRGAP2 which is involved in cell migration and differentiation. Acts as a transcriptional corepressor in CRY1-mediated repression of the core circadian component PER1 by regulating the H4R3 dimethylation at the PER1 promoter. Methylates GM130/GOLGA2, regulating Golgi ribbon formation. Methylates H4R3 in genes involved in glioblastomagenesis in a CHTOP- and/or TET1-dependent manner. Symmetrically methylates POLR2A, a modification that allows the recruitment to POLR2A of proteins including SMN1/SMN2 and SETX. This is required for resolving RNA-DNA hybrids created by RNA polymerase II, that form R-loop in transcription terminal regions, an important step in proper transcription termination. Along with LYAR, binds the promoter of gamma-globin HBG1/HBG2 and represses its expression. Symmetrically methylates NCL. Methylates p53/TP53; methylation might possibly affect p53/TP53 target gene specificity. Involved in spliceosome maturation and mRNA splicing in prophase I spermatocytes through the catalysis of the symmetrical arginine dimethylation of SNRPB (small nuclear ribonucleoprotein-associated protein) and the interaction with tudor domain-containing protein TDRD6. The sequence is that of Protein arginine N-methyltransferase 5 (PRMT5) from Homo sapiens (Human).